The primary structure comprises 210 residues: 3-demethoxyubiquinol 3-hydroxylase (210 aa).

Fe cation contacts are provided by glutamate 59, glutamate 89, histidine 92, glutamate 141, glutamate 173, and histidine 176.

It belongs to the COQ7 family. It depends on Fe cation as a cofactor.

The protein localises to the cell membrane. The catalysed reaction is a 5-methoxy-2-methyl-3-(all-trans-polyprenyl)benzene-1,4-diol + AH2 + O2 = a 3-demethylubiquinol + A + H2O. It functions in the pathway cofactor biosynthesis; ubiquinone biosynthesis. In terms of biological role, catalyzes the hydroxylation of 2-nonaprenyl-3-methyl-6-methoxy-1,4-benzoquinol during ubiquinone biosynthesis. The sequence is that of 3-demethoxyubiquinol 3-hydroxylase from Albidiferax ferrireducens (strain ATCC BAA-621 / DSM 15236 / T118) (Rhodoferax ferrireducens).